The sequence spans 263 residues: Putative SNAP25 homologous protein SNAP30 (263 aa).

Disordered stretches follow at residues 1 to 61 (MFGF…LQSQ) and 132 to 209 (NLGG…DGLS). Polar residues-rich tracts occupy residues 8–34 (PGNN…TSSE) and 52–61 (FNDSGGLQSQ). Over residues 158-173 (KPSKKSENHKEEREKL) the composition is skewed to basic and acidic residues. Residues 180–194 (RSSSQPALDQPTNAL) are compositionally biased toward polar residues. Positions 197–206 (VEQEKAKQDD) are enriched in basic and acidic residues. In terms of domain architecture, t-SNARE coiled-coil homology spans 198 to 260 (EQEKAKQDDG…QGANQRARHL (63 aa)).

It belongs to the SNAP-25 family.

Its subcellular location is the membrane. It is found in the cytoplasm. Its function is as follows. Vesicle trafficking protein that functions in the secretory pathway. The chain is Putative SNAP25 homologous protein SNAP30 (SNAP30) from Arabidopsis thaliana (Mouse-ear cress).